The following is a 313-amino-acid chain: Aspartate carbamoyltransferase catalytic subunit (313 aa).

2 residues coordinate carbamoyl phosphate: Arg55 and Thr56. Residue Lys83 participates in L-aspartate binding. 3 residues coordinate carbamoyl phosphate: Arg105, His138, and Gln141. Residues Arg171 and Arg225 each contribute to the L-aspartate site. Gly266 and Pro267 together coordinate carbamoyl phosphate.

The protein belongs to the aspartate/ornithine carbamoyltransferase superfamily. ATCase family. Heterododecamer (2C3:3R2) of six catalytic PyrB chains organized as two trimers (C3), and six regulatory PyrI chains organized as three dimers (R2).

It catalyses the reaction carbamoyl phosphate + L-aspartate = N-carbamoyl-L-aspartate + phosphate + H(+). The protein operates within pyrimidine metabolism; UMP biosynthesis via de novo pathway; (S)-dihydroorotate from bicarbonate: step 2/3. Catalyzes the condensation of carbamoyl phosphate and aspartate to form carbamoyl aspartate and inorganic phosphate, the committed step in the de novo pyrimidine nucleotide biosynthesis pathway. The sequence is that of Aspartate carbamoyltransferase catalytic subunit from Corynebacterium diphtheriae (strain ATCC 700971 / NCTC 13129 / Biotype gravis).